Here is a 261-residue protein sequence, read N- to C-terminus: Glucosamine-6-phosphate deaminase (261 aa).

Catalysis depends on Asp-67, which acts as the Proton acceptor; for enolization step. Asp-136 (for ring-opening step) is an active-site residue. Catalysis depends on His-138, which acts as the Proton acceptor; for ring-opening step. Glu-143 serves as the catalytic For ring-opening step.

This sequence belongs to the glucosamine/galactosamine-6-phosphate isomerase family. NagB subfamily.

It carries out the reaction alpha-D-glucosamine 6-phosphate + H2O = beta-D-fructose 6-phosphate + NH4(+). Its pathway is amino-sugar metabolism; N-acetylneuraminate degradation; D-fructose 6-phosphate from N-acetylneuraminate: step 5/5. Its function is as follows. Catalyzes the reversible isomerization-deamination of glucosamine 6-phosphate (GlcN6P) to form fructose 6-phosphate (Fru6P) and ammonium ion. In Streptomyces avermitilis (strain ATCC 31267 / DSM 46492 / JCM 5070 / NBRC 14893 / NCIMB 12804 / NRRL 8165 / MA-4680), this protein is Glucosamine-6-phosphate deaminase.